The following is a 657-amino-acid chain: Methyl-accepting chemotaxis protein CtpL (657 aa).

Residues 1–5 lie on the Cytoplasmic side of the membrane; sequence MRLKQ. A helical transmembrane segment spans residues 6–26; sequence LTNLNTLLLLTVCLALGITLW. Residues 27–305 are Periplasmic-facing; the sequence is WSQRAMERPF…ERQRLQGQVR (279 aa). The chain crosses the membrane as a helical span at residues 306–326; it reads LIQGGMIALILLIALAIDSLQ. Positions 327-380 constitute an HAMP domain; that stretch reads RRLARVLGQLVPALSAWADGDFSRPISLRTRTEDLRNLEDSLNRLRSFLAELVG. Over 327 to 657 the chain is Cytoplasmic; it reads RRLARVLGQL…LRTTVQAFRL (331 aa). The Methyl-accepting transducer domain maps to 385–621; it reads RAEQVAGSSQ…EIRSHSERIH (237 aa).

Belongs to the methyl-accepting chemotaxis (MCP) protein family.

The protein resides in the cell inner membrane. Its function is as follows. Chemotactic-signal transducers respond to changes in the concentration of attractants and repellents in the environment, transduce a signal from the outside to the inside of the cell, and facilitate sensory adaptation through the variation of the level of methylation. Chemoreceptor for inorganic phosphate, which is required for taxis at low concentrations of phosphate. Is also responsible for the positive chemotaxis toward 4-chloroaniline (4CA) and catechol. Does not recognize inorganic phosphate directly, but via a complex between the periplasmic protein PstS and inorganic phosphate. The chain is Methyl-accepting chemotaxis protein CtpL from Pseudomonas aeruginosa (strain ATCC 15692 / DSM 22644 / CIP 104116 / JCM 14847 / LMG 12228 / 1C / PRS 101 / PAO1).